A 224-amino-acid polypeptide reads, in one-letter code: Response regulator protein GraR (224 aa).

A Response regulatory domain is found at 2-115; that stretch reads QILLVEDDNT…VLIAKLQAIY (114 aa). 4-aspartylphosphate is present on Asp-51. The segment at residues 126-224 is a DNA-binding region (ompR/PhoB-type); that stretch reads KRTLTWQDAI…KVGKGYMAHE (99 aa). Phosphothreonine is present on residues Thr-128, Thr-130, and Thr-149.

As to quaternary structure, interacts with GraX. Post-translationally, phosphorylated by GraS. Phosphorylated by Stk1; phosphorylation increases the DNA-binding activity of GraR.

The protein localises to the cytoplasm. Functionally, member of the two-component regulatory system GraR/GraS involved in resistance against cationic antimicrobial peptides (CAMPs). Upon phosphorylation by GraS, functions as a transcription regulator by direct binding to promoter regions of target genes such as adhesins, exoproteins, transporters, toxins, and proteins involved in cell wall synthesis. Down-regulates the expression of many genes involved in RNA and amino acid synthesis or glycolysis. The protein is Response regulator protein GraR (graR) of Staphylococcus aureus (strain bovine RF122 / ET3-1).